The chain runs to 283 residues: Protein/nucleic acid deglycase HchA (283 aa).

Zn(2+) contacts are provided by histidine 86, glutamate 91, and histidine 123. Cysteine 185 functions as the Nucleophile in the catalytic mechanism.

It belongs to the peptidase C56 family. HchA subfamily. In terms of assembly, homodimer.

Its subcellular location is the cytoplasm. The enzyme catalyses N(omega)-(1-hydroxy-2-oxopropyl)-L-arginyl-[protein] + H2O = lactate + L-arginyl-[protein] + H(+). It catalyses the reaction N(6)-(1-hydroxy-2-oxopropyl)-L-lysyl-[protein] + H2O = lactate + L-lysyl-[protein] + H(+). It carries out the reaction S-(1-hydroxy-2-oxopropyl)-L-cysteinyl-[protein] + H2O = lactate + L-cysteinyl-[protein] + H(+). The catalysed reaction is N(omega)-(1-hydroxy-2-oxoethyl)-L-arginyl-[protein] + H2O = L-arginyl-[protein] + glycolate + H(+). The enzyme catalyses N(6)-(1-hydroxy-2-oxoethyl)-L-lysyl-[protein] + H2O = glycolate + L-lysyl-[protein] + H(+). It catalyses the reaction S-(1-hydroxy-2-oxoethyl)-L-cysteinyl-[protein] + H2O = glycolate + L-cysteinyl-[protein] + H(+). It carries out the reaction N(2)-(1-hydroxy-2-oxopropyl)-dGTP + H2O = lactate + dGTP + H(+). The catalysed reaction is N(2)-(1-hydroxy-2-oxopropyl)-GTP + H2O = lactate + GTP + H(+). The enzyme catalyses N(2)-(1-hydroxy-2-oxopropyl)-GDP + H2O = lactate + GDP + H(+). It catalyses the reaction N(2)-(1-hydroxy-2-oxopropyl)-GMP + H2O = lactate + GMP + H(+). It carries out the reaction N(2)-(1-hydroxy-2-oxoethyl)-dGTP + H2O = dGTP + glycolate + H(+). The catalysed reaction is N(2)-(1-hydroxy-2-oxoethyl)-GTP + H2O = glycolate + GTP + H(+). The enzyme catalyses N(2)-(1-hydroxy-2-oxoethyl)-GDP + H2O = glycolate + GDP + H(+). It catalyses the reaction N(2)-(1-hydroxy-2-oxoethyl)-GMP + H2O = glycolate + GMP + H(+). It carries out the reaction an N(2)-(1-hydroxy-2-oxopropyl)-guanosine in RNA + H2O = a guanosine in RNA + lactate + H(+). The catalysed reaction is an N(2)-(1-hydroxy-2-oxopropyl)-2'-deoxyguanosine in DNA + H2O = a 2'-deoxyguanosine in DNA + lactate + H(+). The enzyme catalyses an N(2)-(1-hydroxy-2-oxoethyl)-guanosine in RNA + H2O = a guanosine in RNA + glycolate + H(+). It catalyses the reaction an N(2)-(1-hydroxy-2-oxoethyl)-2'-deoxyguanosine in DNA + H2O = a 2'-deoxyguanosine in DNA + glycolate + H(+). Protein and nucleotide deglycase that catalyzes the deglycation of the Maillard adducts formed between amino groups of proteins or nucleotides and reactive carbonyl groups of glyoxals. Thus, functions as a protein deglycase that repairs methylglyoxal- and glyoxal-glycated proteins, and releases repaired proteins and lactate or glycolate, respectively. Deglycates cysteine, arginine and lysine residues in proteins, and thus reactivates these proteins by reversing glycation by glyoxals. Acts on early glycation intermediates (hemithioacetals and aminocarbinols), preventing the formation of Schiff bases and advanced glycation endproducts (AGE). Also functions as a nucleotide deglycase able to repair glycated guanine in the free nucleotide pool (GTP, GDP, GMP, dGTP) and in DNA and RNA. Is thus involved in a major nucleotide repair system named guanine glycation repair (GG repair), dedicated to reversing methylglyoxal and glyoxal damage via nucleotide sanitization and direct nucleic acid repair. Plays an important role in protecting cells from carbonyl stress. The polypeptide is Protein/nucleic acid deglycase HchA (Escherichia coli O157:H7).